A 395-amino-acid chain; its full sequence is Non-homologous end joining protein Ku (395 aa).

The region spanning 9 to 181 (ISFGLVSIPI…PPEDAAPDGD (173 aa)) is the Ku domain. Residues 252 to 395 (RAARTSRDDE…SASSRKRTSA (144 aa)) form a disordered region. Polar residues-rich tracts occupy residues 283-292 (SSKTSGQSSG) and 311-320 (GKTVTRSGDS). The segment covering 351–361 (TARKTTAKKTT) has biased composition (basic residues). Low complexity predominate over residues 362–371 (AKGTTGTTAA).

This sequence belongs to the prokaryotic Ku family. In terms of assembly, homodimer. Interacts with LigD.

Functionally, with LigD forms a non-homologous end joining (NHEJ) DNA repair enzyme, which repairs dsDNA breaks with reduced fidelity. Binds linear dsDNA with 5'- and 3'- overhangs but not closed circular dsDNA nor ssDNA. Recruits and stimulates the ligase activity of LigD. This is Non-homologous end joining protein Ku from Streptomyces griseus subsp. griseus (strain JCM 4626 / CBS 651.72 / NBRC 13350 / KCC S-0626 / ISP 5235).